A 218-amino-acid chain; its full sequence is Ropporin-1-like protein (218 aa).

In terms of domain architecture, RIIa spans 17 to 54; it reads PALPNMLKQFTKAAIRTQPRDVLQWAADYFSALSKGQD. The tract at residues 199-218 is disordered; the sequence is QSQGGMVQPSNFTSLHTAEK.

It belongs to the ropporin family. Component of axonemal radial spoke complexes.

The protein localises to the cell projection. Its subcellular location is the cilium. The protein resides in the flagellum. Its function is as follows. Functions as part of axonemal radial spoke complexes that play an important part in the motility of sperm and cilia. Important for male fertility. Involved in fibrous sheath integrity and sperm motility, plays a role in PKA-dependent signaling processes required for spermatozoa capacitation. In Danio rerio (Zebrafish), this protein is Ropporin-1-like protein (ropn1l).